The chain runs to 1176 residues: Surface-layer 125 kDa protein (1176 aa).

The first 30 residues, 1–30 (MAKQNKGRKFFAASATAALVASAIVPVASA), serve as a signal peptide directing secretion. 3 consecutive SLH domains span residues 31 to 88 (AQLN…LEAE), 89 to 152 (GDVN…DLSE), and 153 to 216 (FADA…PKVD).

It localises to the secreted. The protein localises to the cell wall. It is found in the S-layer. In terms of biological role, the S-layer is a paracrystalline mono-layered assembly of proteins which coat the surface of bacteria. The polypeptide is Surface-layer 125 kDa protein (Lysinibacillus sphaericus (Bacillus sphaericus)).